We begin with the raw amino-acid sequence, 118 residues long: UPF0295 protein GWCH70_0499 (118 aa).

Helical transmembrane passes span 12–32 and 42–62; these read IRTF…IGIF and LFMI…FWIG.

Belongs to the UPF0295 family.

It is found in the cell membrane. This chain is UPF0295 protein GWCH70_0499, found in Geobacillus sp. (strain WCH70).